Here is an 897-residue protein sequence, read N- to C-terminus: Alanine--tRNA ligase (897 aa).

Zn(2+)-binding residues include H581, H585, C684, and H688.

It belongs to the class-II aminoacyl-tRNA synthetase family. Zn(2+) serves as cofactor.

Its subcellular location is the cytoplasm. The enzyme catalyses tRNA(Ala) + L-alanine + ATP = L-alanyl-tRNA(Ala) + AMP + diphosphate. In terms of biological role, catalyzes the attachment of alanine to tRNA(Ala) in a two-step reaction: alanine is first activated by ATP to form Ala-AMP and then transferred to the acceptor end of tRNA(Ala). Also edits incorrectly charged Ser-tRNA(Ala) and Gly-tRNA(Ala) via its editing domain. The sequence is that of Alanine--tRNA ligase from Mycobacterium sp. (strain JLS).